Here is an 860-residue protein sequence, read N- to C-terminus: Leucine--tRNA ligase (860 aa).

Residues 42 to 52 carry the 'HIGH' region motif; that stretch reads PYPSGRLHMGH. Residues 619–623 carry the 'KMSKS' region motif; sequence KMSKS. Lysine 622 contacts ATP.

Belongs to the class-I aminoacyl-tRNA synthetase family.

It localises to the cytoplasm. The enzyme catalyses tRNA(Leu) + L-leucine + ATP = L-leucyl-tRNA(Leu) + AMP + diphosphate. The polypeptide is Leucine--tRNA ligase (Escherichia coli O127:H6 (strain E2348/69 / EPEC)).